A 353-amino-acid polypeptide reads, in one-letter code: Photosystem II D2 protein (353 aa).

T2 carries the N-acetylthreonine modification. T2 is modified (phosphothreonine). Residues 41–61 (CAYFAVGGWFTGTTFVTSWYT) traverse the membrane as a helical segment. Chlorophyll a is bound at residue H118. A helical membrane pass occupies residues 125–141 (GFMLRQFELARSVQLRP). 2 residues coordinate pheophytin a: Q130 and N143. Residues 153 to 166 (VFVSVFLIYPLGQS) traverse the membrane as a helical segment. Residue H198 participates in chlorophyll a binding. A helical transmembrane segment spans residues 208-228 (AALLCAIHGATVENTLFEDGD). 2 residues coordinate a plastoquinone: H215 and F262. H215 provides a ligand contact to Fe cation. A Fe cation-binding site is contributed by H269. The helical transmembrane segment at 279–295 (GLWMSALGVVGLALNLR) threads the bilayer.

It belongs to the reaction center PufL/M/PsbA/D family. In terms of assembly, PSII is composed of 1 copy each of membrane proteins PsbA, PsbB, PsbC, PsbD, PsbE, PsbF, PsbH, PsbI, PsbJ, PsbK, PsbL, PsbM, PsbT, PsbX, PsbY, PsbZ, Psb30/Ycf12, at least 3 peripheral proteins of the oxygen-evolving complex and a large number of cofactors. It forms dimeric complexes. The cofactor is The D1/D2 heterodimer binds P680, chlorophylls that are the primary electron donor of PSII, and subsequent electron acceptors. It shares a non-heme iron and each subunit binds pheophytin, quinone, additional chlorophylls, carotenoids and lipids. There is also a Cl(-1) ion associated with D1 and D2, which is required for oxygen evolution. The PSII complex binds additional chlorophylls, carotenoids and specific lipids..

It localises to the plastid. It is found in the chloroplast thylakoid membrane. It carries out the reaction 2 a plastoquinone + 4 hnu + 2 H2O = 2 a plastoquinol + O2. Its function is as follows. Photosystem II (PSII) is a light-driven water:plastoquinone oxidoreductase that uses light energy to abstract electrons from H(2)O, generating O(2) and a proton gradient subsequently used for ATP formation. It consists of a core antenna complex that captures photons, and an electron transfer chain that converts photonic excitation into a charge separation. The D1/D2 (PsbA/PsbD) reaction center heterodimer binds P680, the primary electron donor of PSII as well as several subsequent electron acceptors. D2 is needed for assembly of a stable PSII complex. This chain is Photosystem II D2 protein, found in Guizotia abyssinica (Niger).